We begin with the raw amino-acid sequence, 302 residues long: Porphobilinogen deaminase (302 aa).

S-(dipyrrolylmethanemethyl)cysteine is present on Cys-234.

The protein belongs to the HMBS family. Monomer. Dipyrromethane serves as cofactor.

The enzyme catalyses 4 porphobilinogen + H2O = hydroxymethylbilane + 4 NH4(+). It functions in the pathway porphyrin-containing compound metabolism; protoporphyrin-IX biosynthesis; coproporphyrinogen-III from 5-aminolevulinate: step 2/4. Tetrapolymerization of the monopyrrole PBG into the hydroxymethylbilane pre-uroporphyrinogen in several discrete steps. This is Porphobilinogen deaminase from Corynebacterium glutamicum (strain R).